A 227-amino-acid chain; its full sequence is ATP-dependent dethiobiotin synthetase BioD (227 aa).

13-18 (DIGKTY) provides a ligand contact to ATP. Residue threonine 17 participates in Mg(2+) binding. The active site involves lysine 38. Serine 42 contacts substrate. Residues aspartate 55, 116–119 (EGSG), and 179–180 (NN) each bind ATP. Mg(2+) contacts are provided by aspartate 55 and glutamate 116.

Belongs to the dethiobiotin synthetase family. In terms of assembly, homodimer. Requires Mg(2+) as cofactor.

It is found in the cytoplasm. The catalysed reaction is (7R,8S)-7,8-diammoniononanoate + CO2 + ATP = (4R,5S)-dethiobiotin + ADP + phosphate + 3 H(+). The protein operates within cofactor biosynthesis; biotin biosynthesis; biotin from 7,8-diaminononanoate: step 1/2. Its function is as follows. Catalyzes a mechanistically unusual reaction, the ATP-dependent insertion of CO2 between the N7 and N8 nitrogen atoms of 7,8-diaminopelargonic acid (DAPA, also called 7,8-diammoniononanoate) to form a ureido ring. The polypeptide is ATP-dependent dethiobiotin synthetase BioD (Clostridium botulinum (strain Kyoto / Type A2)).